The following is a 724-amino-acid chain: Catalase-peroxidase (724 aa).

Residues Met1–Thr20 are disordered. A cross-link (tryptophyl-tyrosyl-methioninium (Trp-Tyr) (with M-251)) is located at residues Trp98 to Tyr225. Catalysis depends on His99, which acts as the Proton acceptor. The segment at residues Tyr225–Met251 is a cross-link (tryptophyl-tyrosyl-methioninium (Tyr-Met) (with W-98)). His266 is a heme b binding site.

This sequence belongs to the peroxidase family. Peroxidase/catalase subfamily. Homodimer or homotetramer. Heme b serves as cofactor. Post-translationally, formation of the three residue Trp-Tyr-Met cross-link is important for the catalase, but not the peroxidase activity of the enzyme.

The catalysed reaction is H2O2 + AH2 = A + 2 H2O. It carries out the reaction 2 H2O2 = O2 + 2 H2O. Functionally, bifunctional enzyme with both catalase and broad-spectrum peroxidase activity. The protein is Catalase-peroxidase of Pectobacterium carotovorum subsp. carotovorum (strain PC1).